Here is a 113-residue protein sequence, read N- to C-terminus: Protein SPIRAL1-like 1 (113 aa).

Gly residues predominate over residues 1–12 (MGRGVSVGGGQS). A disordered region spans residues 1–50 (MGRGVSVGGGQSSLGYLFGSGEAPKPAINNAPAPSSETLPISADPSPKHV). The span at 23 to 34 (APKPAINNAPAP) shows a compositional bias: low complexity. Ser-69 bears the Phosphoserine mark. A disordered region spans residues 79–113 (QNTGNFLTDRPSTKVHAAPGGGSSLDYLFGGGGSN). A compositionally biased stretch (gly residues) spans 97–113 (PGGGSSLDYLFGGGGSN).

Belongs to the SPIRAL1 family. In terms of tissue distribution, detected in pollen of mature flowers.

Functionally, acts redundantly with SPR1 in maintaining the cortical microtubules organization essential for anisotropic cell growth. This chain is Protein SPIRAL1-like 1 (SP1L1), found in Arabidopsis thaliana (Mouse-ear cress).